Consider the following 613-residue polypeptide: MDPNLKGITGQSFLDDQAECSESDNSEQGCEESLSDLSDLIDNAECEQGNSAELFAQQEAFAFQEHIRTTKRKLKLSFRNPLQCITSQSNRSPGRAAPKRRVLDDSGYNEDILAEVAQVDENGGSEGYGSLASQSLSGQSQKNGKNRVNNGNKENIDCTRLLAASSHRAVQLAIFKEKFGISLNSLTRIFKNDKTCCSNWVGVVFGAREELLAASQTILQRVCDSIMLLTHTCKLGFMGLYLLEFKNAKSRDTVRHLFQQILQVENNDMLLEPPKIKSLPAATFWWKLRHSSAAFLFGNLPDWIARQTSITHQIQEDQPFDLSAMVQWAYDHNFVDEAQIAYYYARLASEDSNAAAFLRCNNQVKHVKECAQMTRYYKTAEMREMSMSKWIKKCLNEIEGTGDWKQIINFIKYQNINFLSFLACFRDLLHSVPKRNCLVIVGPPNTGKSMFVMSLMRTLKGRVLSFVNSKSHFWLQPLNAAKIAILDDATRPTWSYIDTYLRNGLDGTPVSLDMKHRAPMQICFPPLIITTNVDVAKDPTFVYLHSRLMSFEFANAFPLDENGKPALILNELSWKSFFERLWNQLDLTEPEDEDDGDPPSPFRCSARAAARDL.

The tract at residues 1 to 31 is disordered; sequence MDPNLKGITGQSFLDDQAECSESDNSEQGCE. Residues 16–31 are compositionally biased toward acidic residues; sequence DQAECSESDNSEQGCE. Residues 71 to 73 carry the Nuclear localization signal motif; the sequence is KRK. Residues Ser77 and Ser92 each carry the phosphoserine; by host modification. Residues 128–152 are disordered; it reads YGSLASQSLSGQSQKNGKNRVNNGN. Low complexity predominate over residues 129–152; sequence GSLASQSLSGQSQKNGKNRVNNGN. The segment at 150 to 317 is DNA-binding region; the sequence is NGNKENIDCT…TSITHQIQED (168 aa). An SF3 helicase domain is found at 413-566; it reads YQNINFLSFL…FPLDENGKPA (154 aa). 442 to 449 contacts ATP; that stretch reads GPPNTGKS. The segment covering 588–597 has biased composition (acidic residues); sequence TEPEDEDDGD. The disordered stretch occupies residues 588–613; that stretch reads TEPEDEDDGDPPSPFRCSARAAARDL.

The protein belongs to the papillomaviridae E1 protein family. As to quaternary structure, can form hexamers. Interacts with E2 protein; this interaction increases E1 DNA binding specificity. Interacts with host DNA polymerase subunit POLA2. Interacts with host single stranded DNA-binding protein RPA1. Interacts with host TOP1; this interaction stimulates the enzymatic activity of TOP1. Phosphorylated.

The protein localises to the host nucleus. The catalysed reaction is Couples ATP hydrolysis with the unwinding of duplex DNA by translocating in the 3'-5' direction.. It catalyses the reaction ATP + H2O = ADP + phosphate + H(+). Its function is as follows. ATP-dependent DNA 3'-5' helicase required for initiation of viral DNA replication. It forms a complex with the viral E2 protein. The E1-E2 complex binds to the replication origin which contains binding sites for both proteins. During the initial step, a dimer of E1 interacts with a dimer of protein E2 leading to a complex that binds the viral origin of replication with high specificity. Then, a second dimer of E1 displaces the E2 dimer in an ATP-dependent manner to form the E1 tetramer. Following this, two E1 monomers are added to each half of the site, which results in the formation of two E1 trimers on the viral ori. Subsequently, two hexamers will be created. The double hexamer acts as a bi-directional helicase machinery and unwinds the viral DNA and then recruits the host DNA polymerase to start replication. The protein is Replication protein E1 of Bos taurus (Bovine).